We begin with the raw amino-acid sequence, 547 residues long: Protein RBL (547 aa).

5 WD repeats span residues 21–60, 65–104, 214–253, 285–332, and 334–373; these read LEHGVIKCVAFNHRGSLLAAGCADGGCVIWDFETRGIAKE, DCSAAITSVSWSKYGHRLLVSAADKSLTLWDVSTGEKIAR, SGAAPVKNIVFSRNGQYLLTNSHDRTIRIYENLLPAKNVL, EFQD…VKIL, and GPKEALIDLAWHPVHPIIVSVSLAGLVYIWAKDYTENWSA. Positions 466-547 are disordered; sequence SPASEEAGQN…GGDDDDDAYY (82 aa). Over residues 499 to 511 the composition is skewed to basic and acidic residues; sequence SEKAMELQAEKAK. The segment covering 530-547 has biased composition (acidic residues); it reads QETDDSINGGDDDDDAYY.

As to quaternary structure, part of a complex composed of TRO, RBL and WDR5A. Interacts with TRO and WDR5A, but not with WDR5B. This complex is formed during both vegetative and reproductive development. In terms of tissue distribution, strongly expressed in root tips, shoot apices, vascular tissues, developing embryos and endosperms.

The protein resides in the nucleus. Functionally, promotes the expression of FLC and FLC homologs to repress the floral transition. Promotes WRKY70 and LTP7 genes epigenetic methylation (e.g. H3K4me3) and subsequent expression. This chain is Protein RBL, found in Arabidopsis thaliana (Mouse-ear cress).